Here is a 792-residue protein sequence, read N- to C-terminus: Kinesin-like protein KIF3C (792 aa).

One can recognise a Kinesin motor domain in the interval 10 to 363; sequence ALKVVARCRP…LRFANRAKNI (354 aa). ATP is bound at residue 97–104; the sequence is GQTGTGKT. 3 disordered regions span residues 249–287, 397–418, and 749–792; these read GSER…RPKE, MLGK…APAG, and RPST…LDHE. The segment covering 257–268 has biased composition (low complexity); that stretch reads GPNTTGGTATQP. The span at 269 to 282 shows a compositional bias: gly residues; sequence TGGGGGGGGGGGGG. Residues 374 to 627 adopt a coiled-coil conformation; sequence KDTLLREFQE…QNEQTRELKL (254 aa). Basic residues predominate over residues 397-412; the sequence is MLGKRLRRKSSRRKKA. The interval 628 to 792 is globular; that stretch reads KYLIIENFIP…LRPTTVLDHE (165 aa). The span at 773-792 shows a compositional bias: low complexity; it reads AHASLAASAALRPTTVLDHE.

The protein belongs to the TRAFAC class myosin-kinesin ATPase superfamily. Kinesin family. Kinesin II subfamily. In terms of assembly, heterodimer of KIF3A and KIF3C.

The protein localises to the cytoplasm. It is found in the cytoskeleton. Functionally, microtubule-based anterograde translocator for membranous organelles. The sequence is that of Kinesin-like protein KIF3C (KIF3C) from Bos taurus (Bovine).